The sequence spans 130 residues: Small ribosomal subunit protein uS9 (130 aa).

The tract at residues 105-130 is disordered; it reads TRDPRMKERKKYGLKGARRAPQFSKR. Residues 111 to 130 are compositionally biased toward basic residues; the sequence is KERKKYGLKGARRAPQFSKR.

It belongs to the universal ribosomal protein uS9 family.

This chain is Small ribosomal subunit protein uS9, found in Bacillus pumilus (strain SAFR-032).